The chain runs to 101 residues: YcgL domain-containing protein ABBFA_001807 (101 aa).

Residues 1-92 (MHCDIYRSSK…PPEGLINPNA (92 aa)) enclose the YcgL domain.

This chain is YcgL domain-containing protein ABBFA_001807, found in Acinetobacter baumannii (strain AB307-0294).